A 725-amino-acid polypeptide reads, in one-letter code: Polyribonucleotide nucleotidyltransferase (725 aa).

The Mg(2+) site is built by aspartate 488 and aspartate 494. The KH domain occupies 555–614 (PRMITMKIHPDKIREVIGKGGSTIQALTKETGTTIDIQEDGTITIASTSTDGMAEAKRRI). The region spanning 624–692 (GKIYAGTVLK…EKGRLRLSLK (69 aa)) is the S1 motif domain. The segment at 702 to 725 (ISPIAQGDAPAAAPAAPASPDQQQ) is disordered. Positions 706 to 725 (AQGDAPAAAPAAPASPDQQQ) are enriched in low complexity.

It belongs to the polyribonucleotide nucleotidyltransferase family. Mg(2+) serves as cofactor.

The protein localises to the cytoplasm. The catalysed reaction is RNA(n+1) + phosphate = RNA(n) + a ribonucleoside 5'-diphosphate. Functionally, involved in mRNA degradation. Catalyzes the phosphorolysis of single-stranded polyribonucleotides processively in the 3'- to 5'-direction. The polypeptide is Polyribonucleotide nucleotidyltransferase (Cupriavidus metallidurans (strain ATCC 43123 / DSM 2839 / NBRC 102507 / CH34) (Ralstonia metallidurans)).